The following is an 89-amino-acid chain: Phosphocarrier protein HPr (89 aa).

The HPr domain occupies 2–89 (AKFSAIITDK…TMIDTALIQG (88 aa)). The active-site Pros-phosphohistidine intermediate is His-15. Residue Ser-46 is modified to Phosphoserine; by HPrK/P.

It belongs to the HPr family.

The protein localises to the cytoplasm. With respect to regulation, phosphorylation on Ser-46 inhibits the phosphoryl transfer from enzyme I to HPr. General (non sugar-specific) component of the phosphoenolpyruvate-dependent sugar phosphotransferase system (sugar PTS). This major carbohydrate active-transport system catalyzes the phosphorylation of incoming sugar substrates concomitantly with their translocation across the cell membrane. The phosphoryl group from phosphoenolpyruvate (PEP) is transferred to the phosphoryl carrier protein HPr by enzyme I. Phospho-HPr then transfers it to the PTS EIIA domain. Its function is as follows. P-Ser-HPr interacts with the catabolite control protein A (CcpA), forming a complex that binds to DNA at the catabolite response elements cre, operator sites preceding a large number of catabolite-regulated genes. Thus, P-Ser-HPr is a corepressor in carbon catabolite repression (CCR), a mechanism that allows bacteria to coordinate and optimize the utilization of available carbon sources. P-Ser-HPr also plays a role in inducer exclusion, in which it probably interacts with several non-PTS permeases and inhibits their transport activity. In Mycoplasma capricolum subsp. capricolum (strain California kid / ATCC 27343 / NCTC 10154), this protein is Phosphocarrier protein HPr (ptsH).